A 466-amino-acid polypeptide reads, in one-letter code: tRNA modification GTPase MnmE (466 aa).

Residues Arg-23, Glu-86, and Lys-125 each coordinate (6S)-5-formyl-5,6,7,8-tetrahydrofolate. The 168-residue stretch at 221–388 folds into the TrmE-type G domain; the sequence is GIPVAIVGEP…LKNELLSFVN (168 aa). Asn-231 is a binding site for K(+). Residues 231–236, 250–256, and 275–278 contribute to the GTP site; these read NVGKST, SDIAGTT, and DTAG. Ser-235 is a binding site for Mg(2+). 3 residues coordinate K(+): Ser-250, Ile-252, and Thr-255. Thr-256 contacts Mg(2+). Residue Lys-466 participates in (6S)-5-formyl-5,6,7,8-tetrahydrofolate binding.

Belongs to the TRAFAC class TrmE-Era-EngA-EngB-Septin-like GTPase superfamily. TrmE GTPase family. Homodimer. Heterotetramer of two MnmE and two MnmG subunits. Requires K(+) as cofactor.

The protein resides in the cytoplasm. Exhibits a very high intrinsic GTPase hydrolysis rate. Involved in the addition of a carboxymethylaminomethyl (cmnm) group at the wobble position (U34) of certain tRNAs, forming tRNA-cmnm(5)s(2)U34. The protein is tRNA modification GTPase MnmE of Flavobacterium johnsoniae (strain ATCC 17061 / DSM 2064 / JCM 8514 / BCRC 14874 / CCUG 350202 / NBRC 14942 / NCIMB 11054 / UW101) (Cytophaga johnsonae).